The primary structure comprises 343 residues: MDFLVLFLFYLAFLLICVVLICIFTKSQRLKAVVLGGAQVCSRVIPQCLQRAVQTLLHQLFHTRHPTFIVLHLLLQGLVYAEYTCEVFGYCRELEFSLPYLLLPYVLLSVNLVFFTLTCAANPGTITKANESFLLQVYKFDDVMFPKNSRCPTCDLRKPARSKHCRLCDRCVHRFDHHCVWVNNCIGAWNTRYFLIYLLTLTASAATIATVTAAFLLRLVTVSDLYQETYLDDVGHFQAVDTVFLIQHLFLAFPRIVFLLGFVIVLSMLLAGYLCFALYLAATNQTTNEWYKGDWAWCQRWPLVAWSPSAEPRIHQNIHSHGFRSNLREIFLPATPSYKKKEK.

The Lumenal segment spans residues 1–2 (MD). Residues 3–23 (FLVLFLFYLAFLLICVVLICI) traverse the membrane as a helical segment. Over 24-67 (FTKSQRLKAVVLGGAQVCSRVIPQCLQRAVQTLLHQLFHTRHPT) the chain is Cytoplasmic. A helical transmembrane segment spans residues 68 to 88 (FIVLHLLLQGLVYAEYTCEVF). Residues 89 to 100 (GYCRELEFSLPY) are Lumenal-facing. A helical transmembrane segment spans residues 101 to 121 (LLLPYVLLSVNLVFFTLTCAA). Topologically, residues 122 to 193 (NPGTITKANE…NCIGAWNTRY (72 aa)) are cytoplasmic. The 51-residue stretch at 149-199 (SRCPTCDLRKPARSKHCRLCDRCVHRFDHHCVWVNNCIGAWNTRYFLIYLL) folds into the DHHC domain. Cys179 acts as the S-palmitoyl cysteine intermediate in catalysis. Residues 194 to 214 (FLIYLLTLTASAATIATVTAA) form a helical membrane-spanning segment. Residues 215-255 (FLLRLVTVSDLYQETYLDDVGHFQAVDTVFLIQHLFLAFPR) are Lumenal-facing. A helical membrane pass occupies residues 256 to 276 (IVFLLGFVIVLSMLLAGYLCF). The Cytoplasmic segment spans residues 277-343 (ALYLAATNQT…ATPSYKKKEK (67 aa)). The short motif at 340 to 343 (KKEK) is the Di-lysine motif element.

Belongs to the DHHC palmitoyltransferase family. Interacts with CPT1A.

It localises to the endoplasmic reticulum membrane. The protein localises to the golgi apparatus membrane. It is found in the cell membrane. The catalysed reaction is L-cysteinyl-[protein] + hexadecanoyl-CoA = S-hexadecanoyl-L-cysteinyl-[protein] + CoA. In terms of biological role, palmitoyltransferase that could catalyze the addition of palmitate onto protein substrates including the D(2) dopamine receptor DRD2, GSK3B or MAVS. Mediates GSK3B palmitoylation to prevent its AKT1-mediated phosphorylation leading to activation of the STAT3 signaling pathway. Also catalyzes MAVS palmitoylation which promotes its stabilization and activation by inhibiting 'Lys-48'- but facilitating 'Lys-63'-linked ubiquitination. This chain is Palmitoyltransferase ZDHHC4, found in Mus musculus (Mouse).